We begin with the raw amino-acid sequence, 63 residues long: 2-hydroxymuconate tautomerase (63 aa).

The Proton acceptor; via imino nitrogen role is filled by Pro-2.

Belongs to the 4-oxalocrotonate tautomerase family. In terms of assembly, homohexamer.

It catalyses the reaction (2Z,4E)-2-hydroxyhexa-2,4-dienedioate = (3E)-2-oxohex-3-enedioate. It participates in xenobiotic degradation; toluene degradation. Its pathway is xenobiotic degradation; xylene degradation. In terms of biological role, catalyzes the ketonization of 2-hydroxymuconate stereoselectively to yield 2-oxo-3-hexenedioate. This chain is 2-hydroxymuconate tautomerase (xylH), found in Pseudomonas putida (Arthrobacter siderocapsulatus).